The following is a 445-amino-acid chain: N-succinylarginine dihydrolase (445 aa).

Substrate-binding positions include 19–28 (AGLSFGNVAS), Asn110, and 137–138 (HR). Residue Glu174 is part of the active site. Arg214 contacts substrate. Residue His250 is part of the active site. 2 residues coordinate substrate: Asp252 and Asn363. The active-site Nucleophile is the Cys369.

It belongs to the succinylarginine dihydrolase family. Homodimer.

It carries out the reaction N(2)-succinyl-L-arginine + 2 H2O + 2 H(+) = N(2)-succinyl-L-ornithine + 2 NH4(+) + CO2. It participates in amino-acid degradation; L-arginine degradation via AST pathway; L-glutamate and succinate from L-arginine: step 2/5. Catalyzes the hydrolysis of N(2)-succinylarginine into N(2)-succinylornithine, ammonia and CO(2). The protein is N-succinylarginine dihydrolase of Shewanella sediminis (strain HAW-EB3).